The primary structure comprises 496 residues: Splicing factor U2AF 65 kDa subunit (496 aa).

Residues 1–26 show a composition bias toward basic and acidic residues; sequence MSDHQDGMKLEDIERQFLDVAQREGG. Residues 1-142 form a disordered region; that stretch reads MSDHQDGMKL…PKKYRFWDVP (142 aa). Residues 59-77 show a composition bias toward basic residues; that stretch reads KKRKRSRSRDRDTRRRSRS. Basic and acidic residues-rich tracts occupy residues 78–96 and 105–138; these read RDRG…DRSR and GGRD…KYRF. RRM domains are found at residues 184-266, 291-368, and 404-488; these read RRLY…RPRD, NKIF…LACA, and NMVT…YYDV.

In terms of assembly, forms a heterodimer with the U2AF small subunit.

Its subcellular location is the nucleus. Necessary for the splicing of pre-mRNA. Binds to the polypyrimidine tract of introns early during spliceosome assembly. The chain is Splicing factor U2AF 65 kDa subunit (uaf-1) from Caenorhabditis elegans.